The chain runs to 122 residues: Large ribosomal subunit protein uL14 (122 aa).

Belongs to the universal ribosomal protein uL14 family. In terms of assembly, part of the 50S ribosomal subunit. Forms a cluster with proteins L3 and L19. In the 70S ribosome, L14 and L19 interact and together make contacts with the 16S rRNA in bridges B5 and B8.

Its function is as follows. Binds to 23S rRNA. Forms part of two intersubunit bridges in the 70S ribosome. The polypeptide is Large ribosomal subunit protein uL14 (Herminiimonas arsenicoxydans).